Consider the following 688-residue polypeptide: Coiled-coil domain-containing protein 157 (688 aa).

Residues 143–153 are compositionally biased toward polar residues; that stretch reads ANQGETLTSKP. Disordered regions lie at residues 143–162, 168–189, 322–341, 366–385, and 592–688; these read ANQGETLTSKPTAKGEPAGS, AQLVKPPSPVPGLPQACPERDS, QAARQRQAQEAEQHRAQWER, QQRESTQAVESKAQQLQAEA, and QGAE…ERPT. The stretch at 288–572 forms a coiled coil; the sequence is KLVGLLRAQL…LSKIREVAQQ (285 aa). Over residues 369 to 382 the composition is skewed to polar residues; it reads ESTQAVESKAQQLQ. Positions 671 to 680 are enriched in low complexity; sequence SPSSGRASPA.

In Bos taurus (Bovine), this protein is Coiled-coil domain-containing protein 157 (CCDC157).